A 104-amino-acid polypeptide reads, in one-letter code: L-rhamnose mutarotase (104 aa).

Tyr18 provides a ligand contact to substrate. The active-site Proton donor is His22. Residues Tyr41 and 76-77 (WW) contribute to the substrate site.

Belongs to the rhamnose mutarotase family. In terms of assembly, homodimer.

It is found in the cytoplasm. The catalysed reaction is alpha-L-rhamnose = beta-L-rhamnose. Its pathway is carbohydrate metabolism; L-rhamnose metabolism. In terms of biological role, involved in the anomeric conversion of L-rhamnose. This Lachnoclostridium phytofermentans (strain ATCC 700394 / DSM 18823 / ISDg) (Clostridium phytofermentans) protein is L-rhamnose mutarotase.